A 508-amino-acid polypeptide reads, in one-letter code: Lysine--tRNA ligase (508 aa).

Mg(2+) contacts are provided by E416 and E423.

The protein belongs to the class-II aminoacyl-tRNA synthetase family. Homodimer. Mg(2+) is required as a cofactor.

Its subcellular location is the cytoplasm. It carries out the reaction tRNA(Lys) + L-lysine + ATP = L-lysyl-tRNA(Lys) + AMP + diphosphate. The sequence is that of Lysine--tRNA ligase from Prochlorococcus marinus (strain MIT 9313).